The following is a 427-amino-acid chain: Serine--tRNA ligase (427 aa).

231 to 233 (TAE) contributes to the L-serine binding site. 262-264 (RSE) serves as a coordination point for ATP. Position 285 (Glu-285) interacts with L-serine. 349–352 (EISS) serves as a coordination point for ATP. Ser-385 is an L-serine binding site.

Belongs to the class-II aminoacyl-tRNA synthetase family. Type-1 seryl-tRNA synthetase subfamily. As to quaternary structure, homodimer. The tRNA molecule binds across the dimer.

It is found in the cytoplasm. The enzyme catalyses tRNA(Ser) + L-serine + ATP = L-seryl-tRNA(Ser) + AMP + diphosphate + H(+). It catalyses the reaction tRNA(Sec) + L-serine + ATP = L-seryl-tRNA(Sec) + AMP + diphosphate + H(+). Its pathway is aminoacyl-tRNA biosynthesis; selenocysteinyl-tRNA(Sec) biosynthesis; L-seryl-tRNA(Sec) from L-serine and tRNA(Sec): step 1/1. In terms of biological role, catalyzes the attachment of serine to tRNA(Ser). Is also able to aminoacylate tRNA(Sec) with serine, to form the misacylated tRNA L-seryl-tRNA(Sec), which will be further converted into selenocysteinyl-tRNA(Sec). This is Serine--tRNA ligase from Sinorhizobium fredii (strain NBRC 101917 / NGR234).